A 1210-amino-acid polypeptide reads, in one-letter code: Microtubule-associated tumor suppressor 1 homolog (1210 aa).

5 disordered regions span residues 1-21, 370-404, 446-482, 513-545, and 585-618; these read MNDDNSDRTEDGSRYVFIRDK, DPHIDSHDNDSDIQSSTEELTLRSVSGQRGSPYEM, VENGPRDAKRAPNLKGEPTNMPKPNLGKSATKTNTTV, QPKDTSIMKDTPSPQVTGGSSPSPGPSKHLTMM, and HSKNASLGVPRTTSATKSNQENVDKTGSPHAGSE. Residues 370 to 379 show a composition bias toward basic and acidic residues; that stretch reads DPHIDSHDND. Residues Ser375, Ser380, and Ser393 each carry the phosphoserine modification. A compositionally biased stretch (polar residues) spans 381 to 398; it reads DIQSSTEELTLRSVSGQR. The segment covering 446–455 has biased composition (basic and acidic residues); it reads VENGPRDAKR. The segment covering 473-482 has biased composition (polar residues); sequence KSATKTNTTV. Residues 524 to 534 are compositionally biased toward low complexity; it reads PSPQVTGGSSP. Positions 585–605 are enriched in polar residues; that stretch reads HSKNASLGVPRTTSATKSNQE. Ser621 bears the Phosphoserine mark. The disordered stretch occupies residues 683–771; sequence SKSLLVGSAP…YEEKPPKQAF (89 aa). The segment covering 692-702 has biased composition (polar residues); that stretch reads PKTSTTPGRSS. Residues 876-1171 adopt a coiled-coil conformation; sequence IQHLLSEREE…RLSMENEELL (296 aa). Phosphoserine is present on residues Ser1143, Ser1164, Ser1185, Ser1195, Ser1199, Ser1201, Ser1203, Ser1204, and Ser1208. A disordered region spans residues 1177–1210; that stretch reads GDLCSPKRSPTSSAIPFQSPRNSGSFSSPSISPR. Low complexity predominate over residues 1195–1210; the sequence is SPRNSGSFSSPSISPR.

This sequence belongs to the MTUS1 family. In terms of assembly, homodimer. Interacts with AGTR2. Interacts with PTPN6. As to expression, ubiquitously expressed, with highest levels in uterus and adrenal gland.

The protein localises to the mitochondrion. It localises to the golgi apparatus. It is found in the cell membrane. Its subcellular location is the nucleus. In terms of biological role, cooperates with AGTR2 to inhibit ERK2 activation and cell proliferation. May be required for AGTR2 cell surface expression. Together with PTPN6, induces UBE2V2 expression upon angiotensin-II stimulation. This is Microtubule-associated tumor suppressor 1 homolog (Mtus1) from Mus musculus (Mouse).